Reading from the N-terminus, the 169-residue chain is SsrA-binding protein (169 aa).

Belongs to the SmpB family.

It localises to the cytoplasm. In terms of biological role, required for rescue of stalled ribosomes mediated by trans-translation. Binds to transfer-messenger RNA (tmRNA), required for stable association of tmRNA with ribosomes. tmRNA and SmpB together mimic tRNA shape, replacing the anticodon stem-loop with SmpB. tmRNA is encoded by the ssrA gene; the 2 termini fold to resemble tRNA(Ala) and it encodes a 'tag peptide', a short internal open reading frame. During trans-translation Ala-aminoacylated tmRNA acts like a tRNA, entering the A-site of stalled ribosomes, displacing the stalled mRNA. The ribosome then switches to translate the ORF on the tmRNA; the nascent peptide is terminated with the 'tag peptide' encoded by the tmRNA and targeted for degradation. The ribosome is freed to recommence translation, which seems to be the essential function of trans-translation. This is SsrA-binding protein from Mycolicibacterium paratuberculosis (strain ATCC BAA-968 / K-10) (Mycobacterium paratuberculosis).